A 398-amino-acid polypeptide reads, in one-letter code: Ras-related GTP-binding protein C (398 aa).

Residues 1-56 (MSLQYGAEETPLAGSYGAADSFPKDFGYGVEEEEEEAAAGGGGGAGAGGGCGPGGA) form a disordered region. The residue at position 2 (Ser-2) is an N-acetylserine. 2 positions are modified to phosphoserine: Ser-2 and Ser-15. Positions 39-55 (AGGGGGAGAGGGCGPGG) are enriched in gly residues. The GDP site is built by Arg-70, Ser-71, Gly-72, Lys-73, Ser-74, and Ser-75. Lys-73 contributes to the GTP binding site. 2 residues coordinate GTP: Thr-89 and Thr-95. Thr-95 is subject to Phosphothreonine. GDP-binding residues include His-177, Lys-178, Asp-180, and Ile-219. Residue Asp-180 coordinates GTP.

Belongs to the GTR/RAG GTP-binding protein family. Forms a heterodimer with RRAGA, in a sequence-independent manner, and RRAGB. Heterodimerization stabilizes proteins of the heterodimer. The GDP-bound form of RRAGC (in complex with the GTP-bound form of RRAGA or RRAGB), interacts with RPTOR, thereby promoting recruitment of mTORC1 to the lysosomes. Component of the lysosomal folliculin complex (LFC), composed of FLCN, FNIP1 (or FNIP2), RagA/RRAGA or RagB/RRAGB GDP-bound, RagC/RRAGC or RagD/RRAGD GTP-bound, and Ragulator. Interacts with NOL8. Interacts with SH3BP4; the interaction with this negative regulator is most probably direct, preferentially occurs with the inactive GDP-bound form of RRAGB, is negatively regulated by amino acids and prevents interaction with RPTOR. The Rag heterodimer interacts with SLC38A9; the probable amino acid sensor. Interacts with SESN1, SESN2 and SESN3. Interacts with PIP4P1. The GDP-bound form interacts with TFEB. The GDP-bound form interacts with TFE3. Expressed most abundantly in kidney. Moderately expressed in brain, ovary, and testis, and detected at lower levels in heart, liver, and muscle. Not detected in lung, spleen, and small intestine. Widely expressed in tumor cells, with expression being specifically up-regulated in highly metastatic cells.

It localises to the cytoplasm. It is found in the nucleus. The protein localises to the lysosome membrane. It carries out the reaction GTP + H2O = GDP + phosphate + H(+). With respect to regulation, the activation of RagC/RRAGC is mediated by a GTPase activating protein (GAP). In high-amino acid conditions, activated by GTPase activating protein FLCN that stimulates RRAGC GTPase activity to turn it into its active GDP-bound form. In response to amino acid depletion, the GATOR1 complex inactivates RagC/RRAGC by securing the GTP-bound inactive form. Its function is as follows. Guanine nucleotide-binding protein that plays a crucial role in the cellular response to amino acid availability through regulation of the mTORC1 signaling cascade. Forms heterodimeric Rag complexes with RagA/RRAGA or RagB/RRAGB and cycles between an inactive GTP-bound and an active GDP-bound form: RagC/RRAGC is in its active form when GDP-bound RagC/RRAGC forms a complex with GTP-bound RagA/RRAGA (or RagB/RRAGB) and in an inactive form when GTP-bound RagC/RRAGC heterodimerizes with GDP-bound RagA/RRAGA (or RagB/RRAGB). In its GDP-bound active form, promotes the recruitment of mTORC1 to the lysosomes and its subsequent activation by the GTPase RHEB. This is a crucial step in the activation of the MTOR signaling cascade by amino acids. Also plays a central role in the non-canonical mTORC1 complex, which acts independently of RHEB and specifically mediates phosphorylation of MiT/TFE factors TFEB and TFE3: GDP-bound RagC/RRAGC mediates recruitment of MiT/TFE factors TFEB and TFE3. The polypeptide is Ras-related GTP-binding protein C (Mus musculus (Mouse)).